The primary structure comprises 336 residues: Alpha-N-acetylgalactosaminide alpha-2,6-sialyltransferase 5 (336 aa).

Residues 1 to 8 (MKTLMRHG) are Cytoplasmic-facing. A helical; Signal-anchor for type II membrane protein membrane pass occupies residues 9–29 (LAVCLALTTMCTSLLLVYSSL). Residues 30-336 (GGQKERPPQQ…INHPENKPVF (307 aa)) are Lumenal-facing. The tract at residues 32-81 (QKERPPQQQQQQQQQQQQASATGSSQPAAESSTQQRPGVPAGPRPLDGYL) is disordered. Low complexity predominate over residues 38–49 (QQQQQQQQQQQQ). Positions 50-67 (ASATGSSQPAAESSTQQR) are enriched in polar residues. Cys96 and Cys245 are joined by a disulfide. 2 N-linked (GlcNAc...) asparagine glycosylation sites follow: Asn137 and Asn161.

It belongs to the glycosyltransferase 29 family.

It localises to the golgi apparatus membrane. The enzyme catalyses a ganglioside GM1b (d18:1(4E)) + CMP-N-acetyl-beta-neuraminate = a ganglioside GD1alpha (d18:1(4E)) + CMP + H(+). The catalysed reaction is N-acetyl-alpha-neuraminosyl-(2-&gt;3)-beta-D-galactosyl-(1-&gt;3)-N-acetyl-beta-D-glucosaminyl-(1-&gt;3)-beta-D-galactosyl-(1-&gt;4)-beta-D-glucosyl-(1&lt;-&gt;1')-N-acyl-sphing-4-enine + CMP-N-acetyl-beta-neuraminate = N-acetyl-alpha-neuraminosyl-(2-&gt;3)-beta-D-galactosyl-(1-&gt;3)-[N-acetyl-alpha-neuraminosyl-(2-&gt;6)]-N-acetyl-beta-D-glucosaminyl-(1-&gt;3)-beta-D-galactosyl-(1-&gt;4)-beta-D-glucosyl-(1&lt;-&gt;1')-N-acyl-sphing-4-enine + CMP + H(+). Its pathway is glycolipid biosynthesis. Predominantly catalyzes the biosynthesis of ganglioside GD1alpha from GM1b in the brain, by transferring the sialyl group (N-acetyl-alpha-neuraminyl or NeuAc) from CMP-NeuAc to the GalNAc residue on the NeuAc-alpha-2,3-Gal-beta-1,3-GalNAc sequence of GM1b. GD1alpha is a critical molecule in the communication and interaction between neuronal cells and their supportive cells, particularly in brain tissues, and functions as an adhesion molecule in the process of metastasis. Also shows activity towards sialyl Lc4Cer (N-acetyl-alpha-neuraminosyl-(2-&gt;3)-beta-D-galactosyl-(1-&gt;3)-N-acetyl-beta-D-glucosaminyl-(1-&gt;3)-beta-D-galactosyl-(1-&gt;4)-beta-D-glucosyl-(1&lt;-&gt;1')-N-acyl-sphing-4-enine) generating disialyl Lc4Cer, which can lead to the synthesis of disialyl Lewis a (Le(a)), suggested to be a cancer-associated antigen. In Homo sapiens (Human), this protein is Alpha-N-acetylgalactosaminide alpha-2,6-sialyltransferase 5 (ST6GALNAC5).